The chain runs to 1295 residues: Phosphoribosylformylglycinamidine synthase (1295 aa).

The interval 302 to 327 (SPWPGASTGSGGEIRDEGATGRGAKP) is disordered. ATP is bound by residues 306–317 (GASTGSGGEIRD) and Ala-677. Mg(2+) is bound by residues Asp-678, Glu-717, Asn-721, and Asp-884. Position 886 (Ser-886) interacts with ATP. The Glutamine amidotransferase type-1 domain maps to 1042–1295 (VAVLREQGVN…IFRNARKQLG (254 aa)). Cys-1135 (nucleophile) is an active-site residue. Residues His-1260 and Glu-1262 contribute to the active site.

The protein in the N-terminal section; belongs to the FGAMS family. Monomer.

It is found in the cytoplasm. The enzyme catalyses N(2)-formyl-N(1)-(5-phospho-beta-D-ribosyl)glycinamide + L-glutamine + ATP + H2O = 2-formamido-N(1)-(5-O-phospho-beta-D-ribosyl)acetamidine + L-glutamate + ADP + phosphate + H(+). Its pathway is purine metabolism; IMP biosynthesis via de novo pathway; 5-amino-1-(5-phospho-D-ribosyl)imidazole from N(2)-formyl-N(1)-(5-phospho-D-ribosyl)glycinamide: step 1/2. Phosphoribosylformylglycinamidine synthase involved in the purines biosynthetic pathway. Catalyzes the ATP-dependent conversion of formylglycinamide ribonucleotide (FGAR) and glutamine to yield formylglycinamidine ribonucleotide (FGAM) and glutamate. In Photorhabdus laumondii subsp. laumondii (strain DSM 15139 / CIP 105565 / TT01) (Photorhabdus luminescens subsp. laumondii), this protein is Phosphoribosylformylglycinamidine synthase.